An 84-amino-acid polypeptide reads, in one-letter code: Omega-theraphotoxin-Pm1a (84 aa).

The first 21 residues, 1-21 (MKTSMLAVFVALPLAFVLTAA), serve as a signal peptide directing secretion. Positions 22–45 (TEERAHPNELVNSLVELVKLDAER) are excised as a propeptide. 3 disulfide bridges follow: C52/C66, C59/C71, and C65/C78.

It belongs to the neurotoxin 10 (Hwtx-1) family. 41 (Jztx-36) subfamily. In terms of tissue distribution, expressed by the venom gland.

It localises to the secreted. In terms of biological role, omega-conotoxins act at presynaptic membranes, they bind and block voltage-gated calcium channels (Cav). This toxin inhibits barium currents (IBa) mediated by L-type voltage-gated calcium channels Cav1.2/CACNA1C (IC(50)=825 nM) and Cav1.3/CACNA1C (IC(50)=2240 nM). The sequence is that of Omega-theraphotoxin-Pm1a from Pelinobius muticus (King baboon spider).